Consider the following 237-residue polypeptide: Probable GTP-binding protein EngB (237 aa).

The 176-residue stretch at 13–188 folds into the EngB-type G domain; sequence TGYEIAFAGR…ASVMAGRLNY (176 aa). GTP-binding positions include 21-28, 48-52, 67-70, 134-137, and 167-169; these read GRSNAGKS, GRTQM, DLPG, TKAD, and FSS. Mg(2+) contacts are provided by serine 28 and threonine 50. A compositionally biased stretch (acidic residues) spans 207–220; it reads DDLNDELMDQDETS. Residues 207–237 are disordered; it reads DDLNDELMDQDETSEFNTENIDDHLDQEPKI. Residues 227–237 show a composition bias toward basic and acidic residues; sequence IDDHLDQEPKI.

Belongs to the TRAFAC class TrmE-Era-EngA-EngB-Septin-like GTPase superfamily. EngB GTPase family. Mg(2+) is required as a cofactor.

Functionally, necessary for normal cell division and for the maintenance of normal septation. This is Probable GTP-binding protein EngB from Acinetobacter baylyi (strain ATCC 33305 / BD413 / ADP1).